Consider the following 271-residue polypeptide: Glutamate racemase (271 aa).

Substrate is bound by residues 10–11 (DS) and 42–43 (YG). Catalysis depends on C73, which acts as the Proton donor/acceptor. 74-75 (NT) contacts substrate. Catalysis depends on C183, which acts as the Proton donor/acceptor. 184–185 (TH) serves as a coordination point for substrate.

The protein belongs to the aspartate/glutamate racemases family.

The enzyme catalyses L-glutamate = D-glutamate. Its pathway is cell wall biogenesis; peptidoglycan biosynthesis. Functionally, provides the (R)-glutamate required for cell wall biosynthesis. This is Glutamate racemase from Lactococcus lactis subsp. cremoris (strain MG1363).